A 220-amino-acid polypeptide reads, in one-letter code: Translin-1 (220 aa).

It belongs to the translin family. As to quaternary structure, forms an octameric ring-shaped structure, which is capable of binding DNA or RNA.

Its subcellular location is the cytoplasm. It localises to the nucleus. DNA-binding protein that specifically recognizes consensus sequences at the breakpoint junctions in chromosomal translocations. Selectively binds single-stranded d(GT)n and d(GTT)n microsatellite repeats. Has much higher affinities for the homologous RNA sequences (GU)n and (GUU)n. Does not bind double-stranded DNA. Has a role in meiosis. This is Translin-1 (tsn1) from Schizosaccharomyces pombe (strain 972 / ATCC 24843) (Fission yeast).